Reading from the N-terminus, the 184-residue chain is CKLF-like MARVEL transmembrane domain-containing protein 3 (184 aa).

A compositionally biased stretch (acidic residues) spans 1 to 12; that stretch reads MWPPDAEPEPDP. The interval 1–22 is disordered; it reads MWPPDAEPEPDPESAHGPRSGR. The region spanning 36–155 is the MARVEL domain; that stretch reads FLCSLKGRLL…DFYLIFNEVA (120 aa). The next 3 helical transmembrane spans lie at 64 to 84, 96 to 116, and 131 to 151; these read ASAF…FLFA, LCWP…YFVI, and AAGV…YLIF. The tract at residues 163-184 is disordered; it reads SGNETTAHRTEEENSNSDSDSD. A compositionally biased stretch (acidic residues) spans 175–184; sequence ENSNSDSDSD.

The protein belongs to the chemokine-like factor family.

The protein localises to the membrane. In Mus musculus (Mouse), this protein is CKLF-like MARVEL transmembrane domain-containing protein 3 (Cmtm3).